A 518-amino-acid chain; its full sequence is DNA-binding protein Ikaros (518 aa).

The disordered stretch occupies residues 1–51; it reads METDEAQDMSQVSGKESPPISDVPDDADEPMPVPEDLSTTTGGQQSVKNER. Over residues 37–47 the composition is skewed to polar residues; the sequence is LSTTTGGQQSV. 4 consecutive C2H2-type zinc fingers follow at residues 117–139, 145–167, 173–195, and 201–224; these read LKCD…NRSH, FQCN…IKLH, FKCH…LRTH, and HKCG…ERCH. Residues 381 to 405 are disordered; the sequence is SVSSERDASPSNSCQDSTDTESNNE. 2 C2H2-type zinc fingers span residues 461–483 and 489–513; these read YKCE…MGCH and FECN…RGEH.

The protein belongs to the Ikaros C2H2-type zinc-finger protein family. In terms of tissue distribution, expressed in embryonic hematopoietic organs such as the bursa of Fabricius, thymus and spleen. In the adult, expressed in spleen, thymus, bursa and peripheral blood leukocytes.

The protein localises to the nucleus. Functionally, binds and activates the enhancer (delta-A element) of the CD3-delta gene. Functions in the specification and the maturation of the T-lymphocyte. Also interacts with a critical control element in the TDT (terminal deoxynucleotidyltransferase) promoter as well as with the promoters for other genes expressed during early stages of B- and T-cell development. Function is isoform-specific and is modulated by dominant-negative inactive isoforms. In Gallus gallus (Chicken), this protein is DNA-binding protein Ikaros (IKZF1).